Reading from the N-terminus, the 267-residue chain is Luciferase (267 aa).

N-linked (GlcNAc...) asparagine glycosylation is present at asparagine 4. The helical transmembrane segment at 17–39 threads the bilayer; sequence LSSRSIAITCGVVLASAIAFPII.

It belongs to the fungal luciferase family.

The protein localises to the membrane. The enzyme catalyses 3-hydroxyhispidin + O2 = (E)-caffeoylpyruvate + hnu + CO2. It carries out the reaction 3-hydroxyhispidin + O2 = 4-[(E)-2-(3,4-dihydroxyphenyl)ethenyl]-1,7-dihydroxy-2,3,5-trioxabicyclo[2.2.2]oct-7-en-6-one. In terms of biological role, luciferase; part of the gene cluster that mediates the fungal bioluminescence cycle. Uses the fungal luciferin 3-hydroxyhispidin as a substrate to produce an endoperoxide as a high-energy intermediate with decomposition that yields oxyluciferin (also known as caffeoylpyruvate) and light emission. The fungal bioluminescence cycle begins with the hispidin synthetase that catalyzes the formation of hispidin which is further hydroxylated by the hispidin-3-hydroxylase, yielding the fungal luciferin 3-hydroxyhispidin. The luciferase then produces an endoperoxide as a high-energy intermediate with decomposition that yields oxyluciferin and light emission. Oxyluciferin can be recycled to caffeic acid by caffeoylpyruvate hydrolase. The chain is Luciferase from Neonothopanus nambi (Agaricus nambi).